The sequence spans 241 residues: Tryptophan synthase alpha chain (241 aa).

Residues E31 and D42 each act as proton acceptor in the active site.

The protein belongs to the TrpA family. As to quaternary structure, tetramer of two alpha and two beta chains.

It carries out the reaction (1S,2R)-1-C-(indol-3-yl)glycerol 3-phosphate + L-serine = D-glyceraldehyde 3-phosphate + L-tryptophan + H2O. It functions in the pathway amino-acid biosynthesis; L-tryptophan biosynthesis; L-tryptophan from chorismate: step 5/5. Functionally, the alpha subunit is responsible for the aldol cleavage of indoleglycerol phosphate to indole and glyceraldehyde 3-phosphate. In Staphylococcus saprophyticus subsp. saprophyticus (strain ATCC 15305 / DSM 20229 / NCIMB 8711 / NCTC 7292 / S-41), this protein is Tryptophan synthase alpha chain.